We begin with the raw amino-acid sequence, 369 residues long: MKSGRFIGVMSGTSLDGVDVVLATIDEHRVAQLASLSWPIPVSLKQAVLDICQGQQLTLSQFGQLDTQLGRLFADAVNALLKEQNLQARDIVAIGCHGQTVWHEPTGVAPHTLQIGDNNQIVARTGITVVGDFRRRDIALGGQGAPLVPAFHHALLAHPTERRMVLNIGGIANLSLLIPGQLVGGYDTGPGNMLMDAWIWRQAGKPYDKDAEWARAGKVILPLLQNMLSDPYFSQPAPKSTGREYFNYGWLERHLRHFPGVDPRDVQATLAELTAVTISEQVLLSGGCERLMVCGGGSRNPLLMARLAVLLLGTEVTTTDAVGISGDDMEALAFAWLAWRTLAGLPGNLPSVTGASQETVLGAIFPANS.

12 to 19 (GTSLDGVD) lines the ATP pocket.

This sequence belongs to the anhydro-N-acetylmuramic acid kinase family.

The catalysed reaction is 1,6-anhydro-N-acetyl-beta-muramate + ATP + H2O = N-acetyl-D-muramate 6-phosphate + ADP + H(+). Its pathway is amino-sugar metabolism; 1,6-anhydro-N-acetylmuramate degradation. It functions in the pathway cell wall biogenesis; peptidoglycan recycling. Catalyzes the specific phosphorylation of 1,6-anhydro-N-acetylmuramic acid (anhMurNAc) with the simultaneous cleavage of the 1,6-anhydro ring, generating MurNAc-6-P. Is required for the utilization of anhMurNAc either imported from the medium or derived from its own cell wall murein, and thus plays a role in cell wall recycling. The protein is Anhydro-N-acetylmuramic acid kinase of Shigella flexneri.